The chain runs to 239 residues: Protein Thf1 (239 aa).

A coiled-coil region spans residues 183–221 (ERVRKDLELYRSSLDRMKQARAVVEEMVKAARRQQERRQ). The span at 211-221 (KAARRQQERRQ) shows a compositional bias: basic and acidic residues. Residues 211 to 239 (KAARRQQERRQSAASLPETSLGDPSKPGS) are disordered.

The protein belongs to the THF1 family.

May be involved in photosynthetic membrane biogenesis. This Synechococcus sp. (strain JA-2-3B'a(2-13)) (Cyanobacteria bacterium Yellowstone B-Prime) protein is Protein Thf1.